Consider the following 900-residue polypeptide: Bifunctional uridylyltransferase/uridylyl-removing enzyme (900 aa).

Residues 1–342 (MPQVDPELFD…PCEQPVQIQP (342 aa)) form a uridylyltransferase region. Positions 343-705 (LNSRFQLRDG…TTQREFESGS (363 aa)) are uridylyl-removing. One can recognise an HD domain in the interval 461 to 583 (VDAHTLNLIK…VGDQTHLDYL (123 aa)). ACT domains lie at 706-789 (QIFI…IIQR) and 816-891 (VLEV…DNGR).

This sequence belongs to the GlnD family. The cofactor is Mg(2+).

It carries out the reaction [protein-PII]-L-tyrosine + UTP = [protein-PII]-uridylyl-L-tyrosine + diphosphate. The catalysed reaction is [protein-PII]-uridylyl-L-tyrosine + H2O = [protein-PII]-L-tyrosine + UMP + H(+). With respect to regulation, uridylyltransferase (UTase) activity is inhibited by glutamine, while glutamine activates uridylyl-removing (UR) activity. Its function is as follows. Modifies, by uridylylation and deuridylylation, the PII regulatory proteins (GlnB and homologs), in response to the nitrogen status of the cell that GlnD senses through the glutamine level. Under low glutamine levels, catalyzes the conversion of the PII proteins and UTP to PII-UMP and PPi, while under higher glutamine levels, GlnD hydrolyzes PII-UMP to PII and UMP (deuridylylation). Thus, controls uridylylation state and activity of the PII proteins, and plays an important role in the regulation of nitrogen assimilation and metabolism. In Pseudomonas aeruginosa (strain ATCC 15692 / DSM 22644 / CIP 104116 / JCM 14847 / LMG 12228 / 1C / PRS 101 / PAO1), this protein is Bifunctional uridylyltransferase/uridylyl-removing enzyme.